An 811-amino-acid polypeptide reads, in one-letter code: Probable glutamine--tRNA ligase (811 aa).

The tract at residues 190-217 is disordered; it reads DAAAGKKKGAKAKNSKQKTVDSGKAKEQ. Positions 194–205 are enriched in basic residues; it reads GKKKGAKAKNSK. The span at 207 to 217 shows a compositional bias: basic and acidic residues; that stretch reads KTVDSGKAKEQ. The 'HIGH' region signature appears at 269–279; sequence PEPNGYLHIGH. ATP-binding positions include 270–272 and 276–282; these read EPN and HIGHSKA. Residues Asp302 and Tyr447 each coordinate L-glutamine. Residues Thr466, 495–496, and 503–505 each bind ATP; these read RL and MSK. The 'KMSKS' region motif lies at 502–506; it reads LMSKR.

This sequence belongs to the class-I aminoacyl-tRNA synthetase family.

The protein localises to the cytoplasm. The enzyme catalyses tRNA(Gln) + L-glutamine + ATP = L-glutaminyl-tRNA(Gln) + AMP + diphosphate. This is Probable glutamine--tRNA ligase (qrs1) from Schizosaccharomyces pombe (strain 972 / ATCC 24843) (Fission yeast).